A 103-amino-acid polypeptide reads, in one-letter code: Large ribosomal subunit protein bL21 (103 aa).

This sequence belongs to the bacterial ribosomal protein bL21 family. In terms of assembly, part of the 50S ribosomal subunit. Contacts protein L20.

This protein binds to 23S rRNA in the presence of protein L20. This Shewanella pealeana (strain ATCC 700345 / ANG-SQ1) protein is Large ribosomal subunit protein bL21.